A 357-amino-acid polypeptide reads, in one-letter code: Protein RecA (357 aa).

73–80 is a binding site for ATP; the sequence is GPESSGKT.

The protein belongs to the RecA family.

It is found in the cytoplasm. Functionally, can catalyze the hydrolysis of ATP in the presence of single-stranded DNA, the ATP-dependent uptake of single-stranded DNA by duplex DNA, and the ATP-dependent hybridization of homologous single-stranded DNAs. It interacts with LexA causing its activation and leading to its autocatalytic cleavage. This chain is Protein RecA, found in Nitratidesulfovibrio vulgaris (strain ATCC 29579 / DSM 644 / CCUG 34227 / NCIMB 8303 / VKM B-1760 / Hildenborough) (Desulfovibrio vulgaris).